Consider the following 326-residue polypeptide: GTPase Obg (326 aa).

The Obg domain occupies 1-159 (MKFVDSAKIY…LEIELELKLM (159 aa)). Residues 119–138 (EGGKGGKGNPHFASSTRQAP) form a disordered region. An OBG-type G domain is found at 160 to 323 (ADVGLVGFPN…LKDELWSRVK (164 aa)). GTP is bound by residues 166–173 (GFPNAGKS), 191–195 (FTTLV), 213–216 (DIPG), 280–283 (TKMD), and 304–306 (SSV). Positions 173 and 193 each coordinate Mg(2+).

Belongs to the TRAFAC class OBG-HflX-like GTPase superfamily. OBG GTPase family. As to quaternary structure, monomer. It depends on Mg(2+) as a cofactor.

The protein localises to the cytoplasm. An essential GTPase which binds GTP, GDP and possibly (p)ppGpp with moderate affinity, with high nucleotide exchange rates and a fairly low GTP hydrolysis rate. Plays a role in control of the cell cycle, stress response, ribosome biogenesis and in those bacteria that undergo differentiation, in morphogenesis control. This is GTPase Obg from Chlorobium phaeobacteroides (strain BS1).